We begin with the raw amino-acid sequence, 412 residues long: Orcinol synthase (412 aa).

Active-site residues include Cys-164, His-322, and Asn-355.

The protein belongs to the thiolase-like superfamily. Chalcone/stilbene synthases family. Homodimer. Mainly expressed in young leaves, and barely in mature leaves and twigs.

It carries out the reaction 3 malonyl-CoA + acetyl-CoA + 3 H(+) = orcinol + 4 CO2 + 4 CoA. The enzyme catalyses 3 malonyl-CoA + acetyl-CoA + 2 H(+) = orsellinate + 3 CO2 + 4 CoA. The catalysed reaction is 3 malonyl-CoA + acetyl-CoA + 3 H(+) = tetraacetate lactone + 3 CO2 + 4 CoA. It catalyses the reaction 2 malonyl-CoA + acetyl-CoA + 2 H(+) = triacetate lactone + 2 CO2 + 3 CoA. It carries out the reaction 3 malonyl-CoA + acetyl-CoA + 3 H(+) = 2-acetylphloroglucinol + 3 CO2 + 4 CoA. It participates in secondary metabolite biosynthesis; terpenoid biosynthesis. Functionally, involved in the biosynthesis of acetate-derived aromatic tetraketides natural products, precursors of daurichromenic acid, an anti-human immunodeficiency viruses (HIV) meroterpenoid consisting of sesquiterpene and orsellinic acid (OSA) moieties. Accepts acetyl-CoA as starter substrate and produces orcinol as the major reaction product, along with four minor products including OSA, tetraacetate lactone, triacetate lactone and 2-acetylphloroglucinol. The protein is Orcinol synthase of Rhododendron dauricum (Azalea daurica).